The primary structure comprises 293 residues: Homoserine kinase (293 aa).

84-94 contacts ATP; the sequence is PLSRGLGSSSA.

It belongs to the GHMP kinase family. Homoserine kinase subfamily.

Its subcellular location is the cytoplasm. It catalyses the reaction L-homoserine + ATP = O-phospho-L-homoserine + ADP + H(+). It participates in amino-acid biosynthesis; L-threonine biosynthesis; L-threonine from L-aspartate: step 4/5. Functionally, catalyzes the ATP-dependent phosphorylation of L-homoserine to L-homoserine phosphate. This chain is Homoserine kinase, found in Nitratiruptor sp. (strain SB155-2).